We begin with the raw amino-acid sequence, 123 residues long: Large ribosomal subunit protein bL12 (123 aa).

This sequence belongs to the bacterial ribosomal protein bL12 family. As to quaternary structure, homodimer. Part of the ribosomal stalk of the 50S ribosomal subunit. Forms a multimeric L10(L12)X complex, where L10 forms an elongated spine to which 2 to 4 L12 dimers bind in a sequential fashion. Binds GTP-bound translation factors.

In terms of biological role, forms part of the ribosomal stalk which helps the ribosome interact with GTP-bound translation factors. Is thus essential for accurate translation. The sequence is that of Large ribosomal subunit protein bL12 from Chlorobium phaeovibrioides (strain DSM 265 / 1930) (Prosthecochloris vibrioformis (strain DSM 265)).